Consider the following 370-residue polypeptide: Putative F-box protein At1g46984 (370 aa).

Positions 18 to 64 (YTQLSTLPIDLIIEILSRLPMNSIAICRLVSKQWASILQSSDFTESF) constitute an F-box domain.

This Arabidopsis thaliana (Mouse-ear cress) protein is Putative F-box protein At1g46984.